The sequence spans 255 residues: tRNA1(Val) (adenine(37)-N6)-methyltransferase (255 aa).

The protein belongs to the methyltransferase superfamily. tRNA (adenine-N(6)-)-methyltransferase family.

It is found in the cytoplasm. The catalysed reaction is adenosine(37) in tRNA1(Val) + S-adenosyl-L-methionine = N(6)-methyladenosine(37) in tRNA1(Val) + S-adenosyl-L-homocysteine + H(+). Specifically methylates the adenine in position 37 of tRNA(1)(Val) (anticodon cmo5UAC). The chain is tRNA1(Val) (adenine(37)-N6)-methyltransferase from Porphyromonas gingivalis (strain ATCC 33277 / DSM 20709 / CIP 103683 / JCM 12257 / NCTC 11834 / 2561).